Reading from the N-terminus, the 171-residue chain is Alpha-amylase/trypsin inhibitor CMd (171 aa).

Positions 1–24 (MACKSSRSLLLLATVMVSVFAAAA) are cleaved as a signal peptide.

This sequence belongs to the protease inhibitor I6 (cereal trypsin/alpha-amylase inhibitor) family. Heterotetramer of one CMa, one CMb and two CMd chains. Post-translationally, five disulfide bonds, which are essential for the inhibitor activity, are probably present. In terms of tissue distribution, endosperm.

Its subcellular location is the secreted. Part of a complex with inhibitory activity, but CMd is inactive as a separate subunit. The sequence is that of Alpha-amylase/trypsin inhibitor CMd (IAT3) from Hordeum vulgare (Barley).